Here is a 399-residue protein sequence, read N- to C-terminus: Stearoyl-[acyl-carrier-protein] 9-desaturase, chloroplastic (399 aa).

Residues 1–12 (MALNLNPVSTPF) show a composition bias toward polar residues. Residues 1 to 35 (MALNLNPVSTPFQCRRLPSFSPRQTPSRRSPKFFM) constitute a chloroplast transit peptide. Residues 1–57 (MALNLNPVSTPFQCRRLPSFSPRQTPSRRSPKFFMASTLSSSSPKEAESLKKPFSPP) are disordered. Residues E141, E179, H182, E232, E265, and H268 each coordinate Fe cation.

It belongs to the fatty acid desaturase type 2 family. In terms of assembly, homodimer. Fe(2+) serves as cofactor.

The protein resides in the plastid. It localises to the chloroplast. It carries out the reaction octadecanoyl-[ACP] + 2 reduced [2Fe-2S]-[ferredoxin] + O2 + 2 H(+) = (9Z)-octadecenoyl-[ACP] + 2 oxidized [2Fe-2S]-[ferredoxin] + 2 H2O. The protein operates within lipid metabolism; fatty acid metabolism. Converts stearoyl-ACP to oleoyl-ACP by introduction of a cis double bond between carbons 9 and 10 of the acyl chain. In Spinacia oleracea (Spinach), this protein is Stearoyl-[acyl-carrier-protein] 9-desaturase, chloroplastic.